A 688-amino-acid polypeptide reads, in one-letter code: MIOREX complex component 1 (688 aa).

A disordered region spans residues 1–24 (MGLKITKGQLRTKDLNQSSSKSSQ). A mitochondrion-targeting transit peptide spans 1-46 (MGLKITKGQLRTKDLNQSSSKSSQSSRIGVDTCIFTRMLPRINTAI).

As to quaternary structure, associates with the mitochondrial ribosome.

It is found in the mitochondrion. Functionally, component of MIOREX complexes, large expressome-like assemblies of ribosomes with factors involved in all the steps of post-transcriptional gene expression. The sequence is that of MIOREX complex component 1 from Saccharomyces cerevisiae (strain ATCC 204508 / S288c) (Baker's yeast).